The sequence spans 487 residues: MAPVVTGKFGERPPPKRLTREAMRNYLKERGDQTVLILHAKVAQKSYGNEKRFFCPPPCVYLMGSGWKKKKEQMERDGCSEQESQPCAFIGIGNSDQEMQQLNLEGKNYCTAKTLYISDSDKRKHFMLSVKMFYGNSDDIGVFLSKRIKVISKPSKKKQSLKNADLCIASGTKVALFNRLRSQTVSTRYLHVEGGNFHASSQQWGAFYIHLLDDDESEGEEFTVRDGYIHYGQTVKLVCSVTGMALPRLIIRKVDKQTALLDADDPVSQLHKCAFYLKDTERMYLCLSQERIIQFQATPCPKEPNKEMINDGASWTIISTDKAEYTFYEGMGPVLAPVTPVPVVESLQLNGGGDVAMLELTGQNFTPNLRVWFGDVEAETMYRCGESMLCVVPDISAFREGWRWVRQPVQVPVTLVRNDGIIYSTSLTFTYTPEPGPRPHCSAAGAILRANSSQVPPNESNTNSEGSYTNVSTNSTSVTSSTATVVS.

DNA-binding regions lie at residues 44 to 54 and 152 to 157; these read QKSYGNEKRFF and SKPSKK. Lys162 carries the post-translational modification N6-acetyllysine. The interval 179 to 184 is DNA-binding; it reads RLRSQT. The IPT/TIG domain maps to 342-432; that stretch reads PVVESLQLNG…YSTSLTFTYT (91 aa). Polar residues predominate over residues 452–468; the sequence is SSQVPPNESNTNSEGSY. A disordered region spans residues 452–487; the sequence is SSQVPPNESNTNSEGSYTNVSTNSTSVTSSTATVVS. Residues 469-487 are compositionally biased toward low complexity; sequence TNVSTNSTSVTSSTATVVS.

It belongs to the Su(H) family. Interacts with activated NOTCH1, NOTCH2 or NOTCH3. Interacts with MINT/SHARP. This interaction may mediate the recruitment of large corepressor complexes containing proteins such as HDAC1, HDAC2, NCOR2, SAP30, FHL1/KYOT2 and CIR1. Interacts with EP300, MAML1 and PTF1A. Interacts with RITA1, leading to nuclear export, prevent the interaction between RBPJ and NICD product and subsequent down-regulation of the Notch signaling pathway. Interacts with SNW1. Interacts with CHCHD2 and CXXC5. Interacts with BEND6 (via BEN domain). Interacts with NKAPL. Interacts with ZMIZ1. Interacts with RBM15. Interacts with L3MBTL3 and KDM1A; the interaction with KDM1A is weaker in the absence of L3MBTL3 and the interaction with L3MBTL3 is impaired by Notch-derived peptides containing the intracellular domain (NICD).

It localises to the nucleus. The protein localises to the cytoplasm. Functionally, transcriptional regulator that plays a central role in Notch signaling, a signaling pathway involved in cell-cell communication that regulates a broad spectrum of cell-fate determinations. Acts as a transcriptional repressor when it is not associated with Notch proteins. When associated with some NICD product of Notch proteins (Notch intracellular domain), it acts as a transcriptional activator that activates transcription of Notch target genes. Probably represses or activates transcription via the recruitment of chromatin remodeling complexes containing histone deacetylase or histone acetylase proteins, respectively. Specifically binds to the immunoglobulin kappa-type J segment recombination signal sequence. Binds specifically to methylated DNA. Binds to the oxygen responsive element of COX4I2 and activates its transcription under hypoxia conditions (4% oxygen). Negatively regulates the phagocyte oxidative burst in response to bacterial infection by repressing transcription of NADPH oxidase subunits. In Bos taurus (Bovine), this protein is Recombining binding protein suppressor of hairless (RBPJ).